The chain runs to 290 residues: Protease HtpX (290 aa).

2 helical membrane-spanning segments follow: residues 6–26 (LFLV…NILF) and 36–56 (ISGL…ISLL). A Zn(2+)-binding site is contributed by histidine 143. Glutamate 144 is a catalytic residue. Histidine 147 contributes to the Zn(2+) binding site. The next 2 membrane-spanning stretches (helical) occupy residues 158–178 (LIQG…AGVI) and 200–220 (ITVF…VMWF). Glutamate 225 provides a ligand contact to Zn(2+).

The protein belongs to the peptidase M48B family. The cofactor is Zn(2+).

The protein localises to the cell inner membrane. The polypeptide is Protease HtpX (Aeromonas salmonicida (strain A449)).